The following is a 565-amino-acid chain: FACT complex subunit ctc-1 (565 aa).

Disordered regions lie at residues 151 to 173 (GNDG…ASAG) and 477 to 565 (LGDD…KKTA). Gly residues predominate over residues 152–165 (NDGGKSNGHSGTGG). 3 stretches are compositionally biased toward acidic residues: residues 478–489 (GDDDMASSDEEA), 500–522 (DEDE…AEEY), and 532–553 (GSEE…DDDE).

It belongs to the SSRP1 family. In terms of assembly, forms a stable heterodimer with ctc-2/spt16. The dimer of ctc-1 and ctc-2 weakly associates with multiple molecules of nhp-1/nhp6 to form the FACT complex.

It localises to the nucleus. It is found in the chromosome. Functionally, component of the FACT complex, a general chromatin factor that acts to reorganize nucleosomes. The FACT complex is involved in multiple processes that require DNA as a template such as mRNA elongation, DNA replication and DNA repair. During transcription elongation the FACT complex acts as a histone chaperone that both destabilizes and restores nucleosomal structure. It facilitates the passage of RNA polymerase II and transcription by promoting the dissociation of one histone H2A-H2B dimer from the nucleosome, then subsequently promotes the reestablishment of the nucleosome following the passage of RNA polymerase II. The sequence is that of FACT complex subunit ctc-1 (ctc-1) from Neurospora crassa (strain ATCC 24698 / 74-OR23-1A / CBS 708.71 / DSM 1257 / FGSC 987).